The following is a 370-amino-acid chain: WAT1-related protein At1g44800 (370 aa).

Helical transmembrane passes span P11 to V31, V41 to F61, P67 to M87, S102 to F122, V142 to V162, W182 to L202, L216 to V236, A252 to I272, V278 to V298, and I303 to W323. EamA domains are found at residues A23–I143 and T195–V322.

This sequence belongs to the drug/metabolite transporter (DMT) superfamily. Plant drug/metabolite exporter (P-DME) (TC 2.A.7.4) family.

It localises to the membrane. In Arabidopsis thaliana (Mouse-ear cress), this protein is WAT1-related protein At1g44800.